An 80-amino-acid polypeptide reads, in one-letter code: Putative membrane protein insertion efficiency factor (80 aa).

Positions 61-80 (KTGKDPVPDHFSLKRNQEGE) are disordered. Over residues 62–80 (TGKDPVPDHFSLKRNQEGE) the composition is skewed to basic and acidic residues.

This sequence belongs to the UPF0161 family.

The protein resides in the cell membrane. Functionally, could be involved in insertion of integral membrane proteins into the membrane. The sequence is that of Putative membrane protein insertion efficiency factor from Streptococcus pneumoniae (strain 70585).